The primary structure comprises 326 residues: MSCAEVMYHPQPYGASQYLPNPMAATTCPTAYYQPAPQPGQQKKLAVFSKMQDSLEVTLPSKQEEEDEEEEEEEKDQPAEMEYLNSRCVLFTYFQGDIGSVVDEHFSRALGQAITLHPESAISKSKMGLTPLWRDSSALSSQRNSFPTSFWTSSYQPPPAPCLGGVHPDFQVTGPPGTFSAADPSPWPGHNLHQTGPAPPPAVSESWPYPLTSQVSPSYSHMHDVYMRHHHPHAHMHHRHRHHHHHHHPPAGSALDPSYGPLLMPSVHAARIPAPQCDITKTEPTTVTSATSAWAGAFHGTVDIVPSVGFDTGLQHQDKSKESPWY.

The tract at residues 57 to 80 is disordered; it reads VTLPSKQEEEDEEEEEEEKDQPAE. Lys62 participates in a covalent cross-link: Glycyl lysine isopeptide (Lys-Gly) (interchain with G-Cter in SUMO2). The span at 64–75 shows a compositional bias: acidic residues; that stretch reads EEEDEEEEEEEK. Lys126 is covalently cross-linked (Glycyl lysine isopeptide (Lys-Gly) (interchain with G-Cter in SUMO2)). Disordered stretches follow at residues 175–203 and 233–256; these read PPGT…PPAV and HAHM…SALD. A compositionally biased stretch (basic residues) spans 233–249; that stretch reads HAHMHHRHRHHHHHHHP.

Belongs to the vestigial family. Enriched in placenta.

Its subcellular location is the nucleus. Functionally, may act as a specific coactivator for the mammalian TEFs. The sequence is that of Transcription cofactor vestigial-like protein 3 (VGLL3) from Homo sapiens (Human).